Consider the following 183-residue polypeptide: Inner membrane-spanning protein YciB (183 aa).

5 consecutive transmembrane segments (helical) span residues 4–24 (FIEF…DIYM), 50–70 (MQLF…FFHD), 72–92 (TFIK…LLIS), 119–139 (VNLG…YVAF), and 149–169 (FKVF…GVYL).

Belongs to the YciB family.

Its subcellular location is the cell inner membrane. Functionally, plays a role in cell envelope biogenesis, maintenance of cell envelope integrity and membrane homeostasis. The polypeptide is Inner membrane-spanning protein YciB (Aeromonas hydrophila subsp. hydrophila (strain ATCC 7966 / DSM 30187 / BCRC 13018 / CCUG 14551 / JCM 1027 / KCTC 2358 / NCIMB 9240 / NCTC 8049)).